Consider the following 72-residue polypeptide: Large ribosomal subunit protein bL31c (72 aa).

This sequence belongs to the bacterial ribosomal protein bL31 family. Type A subfamily. In terms of assembly, part of the 50S ribosomal subunit.

Its subcellular location is the plastid. The protein resides in the chloroplast. Functionally, binds the 23S rRNA. The polypeptide is Large ribosomal subunit protein bL31c (Trieres chinensis (Marine centric diatom)).